Consider the following 351-residue polypeptide: Very-long-chain 3-oxoacyl-CoA reductase (351 aa).

A helical transmembrane segment spans residues 26 to 46 (LLWCAFTVGAVKLTTFMLSLI). Residues leucine 72, aspartate 126, asparagine 153, tyrosine 225, lysine 229, valine 258, and serine 260 each contribute to the NADP(+) site. Tyrosine 225 serves as the catalytic Proton donor. Lysine 229 serves as the catalytic Lowers pKa of active site Tyr.

It belongs to the short-chain dehydrogenases/reductases (SDR) family.

Its subcellular location is the endoplasmic reticulum membrane. It catalyses the reaction a very-long-chain (3R)-3-hydroxyacyl-CoA + NADP(+) = a very-long-chain 3-oxoacyl-CoA + NADPH + H(+). The protein operates within lipid metabolism; fatty acid biosynthesis. Its function is as follows. Component of the microsomal membrane bound fatty acid elongation system, which produces the 26-carbon very long-chain fatty acids (VLCFA) from palmitate. Catalyzes the reduction of the 3-ketoacyl-CoA intermediate that is formed in each cycle of fatty acid elongation. VLCFAs serve as precursors for ceramide and sphingolipids. The protein is Very-long-chain 3-oxoacyl-CoA reductase of Eremothecium gossypii (strain ATCC 10895 / CBS 109.51 / FGSC 9923 / NRRL Y-1056) (Yeast).